The primary structure comprises 626 residues: Dual specificity testis-specific protein kinase 1 (626 aa).

Residues 1-41 (MAGERPPLRGPGPGPGEVPGEGPPGPGGTGGGPGRGRPSSY) form a disordered region. A compositionally biased stretch (pro residues) spans 8 to 26 (LRGPGPGPGEVPGEGPPGP). The 258-residue stretch at 57-314 (FHCAEKIGAG…TEITQHLEWI (258 aa)) folds into the Protein kinase domain. Residues 63–71 (IGAGFFSEV) and K86 contribute to the ATP site. The Proton acceptor role is filled by D175. The residue at position 220 (S220) is a Phosphoserine; by autocatalysis. Disordered regions lie at residues 331–373 (HNQG…NWGD), 423–488 (ETLV…QLPL), and 529–564 (WAGE…EPDE). R338 carries the post-translational modification Omega-N-methylarginine. Over residues 348–357 (PDPRLSRSRS) the composition is skewed to basic and acidic residues. The tract at residues 419–524 (VTTPETLVQP…NNNPPAVVVN (106 aa)) is required for interaction with YWHAB. Positions 476–485 (EPEPPGPAPQ) are enriched in pro residues. The interval 527-624 (QGWAGEPWNR…PTPSLQLPGA (98 aa)) is required for interaction with PARVA. Residues 527–626 (QGWAGEPWNR…PSLQLPGARS (100 aa)) form a required for interaction with SPRED1 and SPRY2. Required for TESK1-mediated dephosphorylation of SPRY2 and SPRY2 inhibition of ERK phosphorylation region.

This sequence belongs to the protein kinase superfamily. TKL Ser/Thr protein kinase family. Interacts (via both C- and N-termini) with SPRY4 (via C-terminus); the interaction inhibits TESK1 kinase activity. Interacts with TAOK1; the interaction inhibits TAOK1 kinase activity. Interacts (via C-terminus) with SPRED1 (via C-terminus); the interaction inhibits TESK1 kinase activity. Interacts (via C-terminus) with PARVA/PARVIN (via C-terminus); the interaction inhibits TESK1 kinase activity. Interacts with YWHAB/14-3-3 beta; the interaction is dependent on the phosphorylation of TESK1 Ser-437 and inhibits TESK1 kinase activity. Interacts with SPRY1, SPRY3 and SPRED2. Interacts (via C-terminus) with SPRY2 (via C-terminus); the interaction disrupts SPRY2 interaction with PPP2CA/PP2A-C, possibly by vesicular sequestration of SPRY2. Therefore dephosphorylation of SPRY2 by the serine/threonine-protein phosphatase 2A (PP2A) holoenzyme is lost, inhibiting its interaction with GRB2. Mg(2+) serves as cofactor. The cofactor is Mn(2+). Post-translationally, autophosphorylated on serine and tyrosine residues. Expressed in podocytes and renal tubular cells in the kidney (at protein level).

The protein resides in the cytoplasm. The protein localises to the perinuclear region. It is found in the cytoskeleton. It localises to the microtubule organizing center. Its subcellular location is the centrosome. The protein resides in the cell projection. The protein localises to the lamellipodium. It carries out the reaction L-seryl-[protein] + ATP = O-phospho-L-seryl-[protein] + ADP + H(+). It catalyses the reaction L-threonyl-[protein] + ATP = O-phospho-L-threonyl-[protein] + ADP + H(+). The catalysed reaction is L-tyrosyl-[protein] + ATP = O-phospho-L-tyrosyl-[protein] + ADP + H(+). With respect to regulation, activated by autophosphorylation on Ser-220. Kinase activity is inhibited by SPRED1. Functionally, dual specificity protein kinase activity catalyzing autophosphorylation and phosphorylation of exogenous substrates on both serine/threonine and tyrosine residues. Regulates the cellular cytoskeleton by enhancing actin stress fiber formation via phosphorylation of cofilin and by preventing microtubule breakdown via inhibition of TAOK1/MARKK kinase activity. Inhibits podocyte motility via regulation of actin cytoskeletal dynamics and phosphorylation of CFL1. Positively regulates integrin-mediated cell spreading, via phosphorylation of cofilin. Suppresses ciliogenesis via multiple pathways; phosphorylation of CFL1, suppression of ciliary vesicle directional trafficking to the ciliary base, and by facilitating YAP1 nuclear localization where it acts as a transcriptional corepressor of the TEAD4 target genes AURKA and PLK1. Probably plays a central role at and after the meiotic phase of spermatogenesis. This chain is Dual specificity testis-specific protein kinase 1 (TESK1), found in Homo sapiens (Human).